The chain runs to 284 residues: 4-diphosphocytidyl-2-C-methyl-D-erythritol kinase (284 aa).

Residue Lys-22 is part of the active site. Residue 104–114 coordinates ATP; that stretch reads PVGAGLGGASS. The active site involves Asp-146.

Belongs to the GHMP kinase family. IspE subfamily.

It carries out the reaction 4-CDP-2-C-methyl-D-erythritol + ATP = 4-CDP-2-C-methyl-D-erythritol 2-phosphate + ADP + H(+). It participates in isoprenoid biosynthesis; isopentenyl diphosphate biosynthesis via DXP pathway; isopentenyl diphosphate from 1-deoxy-D-xylulose 5-phosphate: step 3/6. Its function is as follows. Catalyzes the phosphorylation of the position 2 hydroxy group of 4-diphosphocytidyl-2C-methyl-D-erythritol. The protein is 4-diphosphocytidyl-2-C-methyl-D-erythritol kinase of Hydrogenobaculum sp. (strain Y04AAS1).